Consider the following 822-residue polypeptide: SKI/DACH domain-containing protein 1 (822 aa).

Basic residues predominate over residues 245–261 (HHHHHHHHHHHHHHHRA). The tract at residues 245-370 (HHHHHHHHHH…SSSGSSQVSV (126 aa)) is disordered. The span at 278–318 (PHLGSFPESCSSDSESSSYSDHAANDSDFGSSLSSSSNSVS) shows a compositional bias: low complexity. The segment covering 319–338 (SEEEEEEGEEEEEEEEEEEG) has biased composition (acidic residues). A Glycyl lysine isopeptide (Lys-Gly) (interchain with G-Cter in SUMO2) cross-link involves residue Lys-602. Disordered stretches follow at residues 658-677 (ETPS…TLGS) and 706-732 (LQTP…THEG). A compositionally biased stretch (polar residues) spans 660–675 (PSLNPLAQSQGLSCTL).

Belongs to the DACH/dachshund family.

The polypeptide is SKI/DACH domain-containing protein 1 (Skida1) (Mus musculus (Mouse)).